A 247-amino-acid chain; its full sequence is Carboxy-S-adenosyl-L-methionine synthase (247 aa).

Residues Tyr39, 64 to 66 (GCS), 89 to 90 (DN), 117 to 118 (DI), Asn132, and Arg199 each bind S-adenosyl-L-methionine.

It belongs to the class I-like SAM-binding methyltransferase superfamily. Cx-SAM synthase family. In terms of assembly, homodimer.

It catalyses the reaction prephenate + S-adenosyl-L-methionine = carboxy-S-adenosyl-L-methionine + 3-phenylpyruvate + H2O. In terms of biological role, catalyzes the conversion of S-adenosyl-L-methionine (SAM) to carboxy-S-adenosyl-L-methionine (Cx-SAM). The sequence is that of Carboxy-S-adenosyl-L-methionine synthase from Escherichia coli O17:K52:H18 (strain UMN026 / ExPEC).